The primary structure comprises 583 residues: Pectinesterase/pectinesterase inhibitor U1 (583 aa).

Positions 1–40 (MTRVEDFFSKQIDFCKRKKKIYLAIVASVLLVAAVIGVVA) are cleaved as a signal peptide. Residues 60–221 (SSAHAIVKSA…EKMCSNALAM (162 aa)) form a pectinesterase inhibitor U1 region. N-linked (GlcNAc...) asparagine glycosylation is found at N85, N105, and N224. Residues 272-570 (DVVVAADGSG…TPGRFIAGGS (299 aa)) form a pectinesterase U1 region. 2 residues coordinate substrate: T347 and Q377. D400 (proton donor; for pectinesterase activity) is an active-site residue. A disulfide bridge connects residues C414 and C434. D421 acts as the Nucleophile; for pectinesterase activity in catalysis. Substrate contacts are provided by R489 and W491.

This sequence in the N-terminal section; belongs to the PMEI family. It in the C-terminal section; belongs to the pectinesterase family.

Its subcellular location is the secreted. It localises to the cell wall. The catalysed reaction is [(1-&gt;4)-alpha-D-galacturonosyl methyl ester](n) + n H2O = [(1-&gt;4)-alpha-D-galacturonosyl](n) + n methanol + n H(+). It participates in glycan metabolism; pectin degradation; 2-dehydro-3-deoxy-D-gluconate from pectin: step 1/5. Its function is as follows. Acts in the modification of cell walls via demethylesterification of cell wall pectin. This is Pectinesterase/pectinesterase inhibitor U1 (PMEU1) from Solanum lycopersicum (Tomato).